Here is a 215-residue protein sequence, read N- to C-terminus: MPGEATETVPATEQELPQSQAETGSGTASDSGESVPGIEEQDSTQTTTQKAWLVAAAEIDEEPVGKAKQSRSEKRARKAMSKLGLLQVTGVTRVTIWKSKNILFVITKLDVYKSPASDAYIVFGEAKIQDLSQQAQLAAAEKFRVQGEAVGNIQENTQTPTVQEESEEEEVDETGVEVKDVKLVMSQANVSRAKAVRALKNNSNDIVNAIMELTV.

The interval 1-51 (MPGEATETVPATEQELPQSQAETGSGTASDSGESVPGIEEQDSTQTTTQKA) is disordered. The segment covering 9–32 (VPATEQELPQSQAETGSGTASDSG) has biased composition (polar residues). A phosphoserine mark is found at Ser-43 and Ser-132. Residues 70-135 (SRSEKRARKA…AKIQDLSQQA (66 aa)) enclose the NAC-A/B domain. Lys-142 is modified (N6-acetyllysine; alternate). Lys-142 participates in a covalent cross-link: Glycyl lysine isopeptide (Lys-Gly) (interchain with G-Cter in SUMO2); alternate. A Phosphothreonine modification is found at Thr-161. Phosphoserine is present on residues Ser-166, Ser-186, Ser-191, and Ser-203. A UBA domain is found at 176–213 (VEVKDVKLVMSQANVSRAKAVRALKNNSNDIVNAIMEL). Position 214 is a phosphothreonine (Thr-214).

The protein belongs to the NAC-alpha family. As to quaternary structure, part of the nascent polypeptide-associated complex (NAC), consisting of NACA and BTF3. NAC associates with ribosomes through the BTF3 subunit. Both subunits can contact nascent polypeptide chains. Expressed specifically in testis and skeletal muscle.

The protein resides in the cytoplasm. Its subcellular location is the nucleus. Functionally, prevents inappropriate targeting of non-secretory polypeptides to the endoplasmic reticulum (ER). Binds to nascent polypeptide chains as they emerge from the ribosome and blocks their interaction with the signal recognition particle (SRP), which normally targets nascent secretory peptides to the ER. Also reduces the inherent affinity of ribosomes for protein translocation sites in the ER membrane (M sites). This is Nascent polypeptide-associated complex subunit alpha-2 (NACA2) from Homo sapiens (Human).